Reading from the N-terminus, the 337-residue chain is Homeobox protein knotted-1-like 4 (337 aa).

Disordered stretches follow at residues 1–56 and 159–190; these read MEQQ…SFHE and FTLD…GLPE. Residues 27-38 show a composition bias toward low complexity; that stretch reads PTSTSTSPAVPS. Residues 200-220 enclose the ELK domain; it reads ELKSHLLNKYSGYLSSLWREL. The segment at residues 221–284 is a DNA-binding region (homeobox; TALE-type); that stretch reads SKKKKKGKLP…NQRKRHWKPT (64 aa).

It belongs to the TALE/KNOX homeobox family.

The protein localises to the nucleus. This is Homeobox protein knotted-1-like 4 (OSH10) from Oryza sativa subsp. japonica (Rice).